The sequence spans 422 residues: UDP-N-acetylglucosamine 1-carboxyvinyltransferase (422 aa).

22–23 (KN) lines the phosphoenolpyruvate pocket. Position 94 (Arg-94) interacts with UDP-N-acetyl-alpha-D-glucosamine. Cys-118 acts as the Proton donor in catalysis. A 2-(S-cysteinyl)pyruvic acid O-phosphothioketal modification is found at Cys-118. UDP-N-acetyl-alpha-D-glucosamine contacts are provided by residues 123–127 (RPVDL), Asp-309, and Ile-331.

It belongs to the EPSP synthase family. MurA subfamily.

Its subcellular location is the cytoplasm. The catalysed reaction is phosphoenolpyruvate + UDP-N-acetyl-alpha-D-glucosamine = UDP-N-acetyl-3-O-(1-carboxyvinyl)-alpha-D-glucosamine + phosphate. It participates in cell wall biogenesis; peptidoglycan biosynthesis. In terms of biological role, cell wall formation. Adds enolpyruvyl to UDP-N-acetylglucosamine. The protein is UDP-N-acetylglucosamine 1-carboxyvinyltransferase of Cereibacter sphaeroides (strain ATCC 17023 / DSM 158 / JCM 6121 / CCUG 31486 / LMG 2827 / NBRC 12203 / NCIMB 8253 / ATH 2.4.1.) (Rhodobacter sphaeroides).